We begin with the raw amino-acid sequence, 174 residues long: RNA pyrophosphohydrolase (174 aa).

Residues 6–149 (GFRANVGIII…KRDVYRKVMK (144 aa)) enclose the Nudix hydrolase domain. A Nudix box motif is present at residues 38–59 (GGVDEGESAEQAMYRELYEEVG).

Belongs to the Nudix hydrolase family. RppH subfamily. It depends on a divalent metal cation as a cofactor.

In terms of biological role, accelerates the degradation of transcripts by removing pyrophosphate from the 5'-end of triphosphorylated RNA, leading to a more labile monophosphorylated state that can stimulate subsequent ribonuclease cleavage. This chain is RNA pyrophosphohydrolase, found in Shewanella loihica (strain ATCC BAA-1088 / PV-4).